The chain runs to 153 residues: Endoribonuclease YbeY (153 aa).

The Zn(2+) site is built by histidine 114, histidine 118, and histidine 124.

The protein belongs to the endoribonuclease YbeY family. Zn(2+) serves as cofactor.

The protein resides in the cytoplasm. In terms of biological role, single strand-specific metallo-endoribonuclease involved in late-stage 70S ribosome quality control and in maturation of the 3' terminus of the 16S rRNA. The protein is Endoribonuclease YbeY of Shewanella baltica (strain OS155 / ATCC BAA-1091).